Consider the following 694-residue polypeptide: Glycine--tRNA ligase beta subunit (694 aa).

This sequence belongs to the class-II aminoacyl-tRNA synthetase family. In terms of assembly, tetramer of two alpha and two beta subunits.

It is found in the cytoplasm. The catalysed reaction is tRNA(Gly) + glycine + ATP = glycyl-tRNA(Gly) + AMP + diphosphate. The chain is Glycine--tRNA ligase beta subunit from Shewanella denitrificans (strain OS217 / ATCC BAA-1090 / DSM 15013).